The sequence spans 152 residues: Ribonuclease H (152 aa).

In terms of domain architecture, RNase H type-1 spans 1-142; it reads MKEVTIYTDG…CDELARAAIA (142 aa). Mg(2+) is bound by residues aspartate 9, glutamate 47, aspartate 69, and aspartate 134.

Belongs to the RNase H family. In terms of assembly, monomer. Mg(2+) serves as cofactor.

The protein resides in the cytoplasm. It catalyses the reaction Endonucleolytic cleavage to 5'-phosphomonoester.. Endonuclease that specifically degrades the RNA of RNA-DNA hybrids. This chain is Ribonuclease H, found in Moorella thermoacetica (strain ATCC 39073 / JCM 9320).